Here is a 115-residue protein sequence, read N- to C-terminus: Large ribosomal subunit protein bL20c (115 aa).

This sequence belongs to the bacterial ribosomal protein bL20 family.

The protein resides in the plastid. It localises to the chloroplast. In terms of biological role, binds directly to 23S ribosomal RNA and is necessary for the in vitro assembly process of the 50S ribosomal subunit. It is not involved in the protein synthesizing functions of that subunit. The protein is Large ribosomal subunit protein bL20c of Nymphaea alba (White water-lily).